The following is a 452-amino-acid chain: Tripartite motif-containing protein 49 (452 aa).

The RING-type zinc-finger motif lies at 15–56; it reads CPLCMNYFIDPVTIDCGHSFCRPCFYLNWQDIPFLVQCSECT. A B box-type zinc finger spans residues 88-129; the sequence is SEEQMCGTHRETKKIFCEVDRSLLCLLCSSSQEHRYHRHRPI. Positions 93, 96, 115, and 121 each coordinate Zn(2+). The 184-residue stretch at 269-452 folds into the B30.2/SPRY domain; that stretch reads ELSAGPITGL…LRPIFCCIHF (184 aa).

Belongs to the TRIM/RBCC family. Preferentially expressed in testis.

In Homo sapiens (Human), this protein is Tripartite motif-containing protein 49 (TRIM49).